Reading from the N-terminus, the 189-residue chain is dCTP deaminase, dUMP-forming (189 aa).

DCTP is bound by residues 101–106 (KSSLGR), Asp119, 127–129 (TLE), Gln148, Tyr162, and Gln174. Catalysis depends on Glu129, which acts as the Proton donor/acceptor. The segment at 163–189 (GSSEAGSKYQGQRGPTPSKAYLNFNRS) is disordered.

Belongs to the dCTP deaminase family. As to quaternary structure, homotrimer.

The enzyme catalyses dCTP + 2 H2O = dUMP + NH4(+) + diphosphate. Its pathway is pyrimidine metabolism; dUMP biosynthesis; dUMP from dCTP: step 1/1. Functionally, bifunctional enzyme that catalyzes both the deamination of dCTP to dUTP and the hydrolysis of dUTP to dUMP without releasing the toxic dUTP intermediate. In Rhodococcus erythropolis (strain PR4 / NBRC 100887), this protein is dCTP deaminase, dUMP-forming.